A 471-amino-acid chain; its full sequence is Argininosuccinate lyase (471 aa).

Belongs to the lyase 1 family. Argininosuccinate lyase subfamily.

The protein resides in the cytoplasm. The catalysed reaction is 2-(N(omega)-L-arginino)succinate = fumarate + L-arginine. It participates in amino-acid biosynthesis; L-arginine biosynthesis; L-arginine from L-ornithine and carbamoyl phosphate: step 3/3. This chain is Argininosuccinate lyase, found in Parasynechococcus marenigrum (strain WH8102).